The primary structure comprises 1050 residues: Ankyrin repeat domain-containing protein 27 (1050 aa).

Positions 1–372 (MALYDEDLLK…RQGSLSAKPP (372 aa)) are sufficient for GEF activity towards RAB21. Residues 233-371 (ASEDAAFNKI…IRQGSLSAKP (139 aa)) form the VPS9 domain. 6 ANK repeats span residues 396–426 (SPTDCLFKHIASGNQKEVERLLSQEDHDKDA), 462–491 (RGHTPLHVAALCGQASLIDLLVSKGAVVNA), 495–524 (HGATPLHLACQKGYQSVTLLLLHYKASAEV), 528–560 (NGNTPLHLACTYGHEDCVKALVYYDVESCRLDI), 564–593 (KGDTPLHIAARWGYQAIIETLLQNGASPEI), and 597–627 (LKETPLKCALNSKILSVMEAYHLSFERRQKS). The sufficient for interaction with VPS29 stretch occupies residues 396–460 (SPTDCLFKHI…PSVVTPFSRD (65 aa)). The tract at residues 451-600 (PSVVTPFSRD…PEIQNRLKET (150 aa)) is interaction with RAB38. The segment at 451–730 (PSVVTPFSRD…APAQKRLAKV (280 aa)) is interaction with RAB32. Residues 630 to 665 (APVQSLQRSVDSISQESSTSSFSSMSAGSRQEETKK) are disordered. A compositionally biased stretch (low complexity) spans 638-658 (SVDSISQESSTSSFSSMSAGS). The required for interaction with VAMP7 stretch occupies residues 658–707 (SRQEETKKDYREVEKLLRAVADGDLEMVRYLLEWTEEDLEDAEDTVSAVD). 5 ANK repeats span residues 668–698 (REVEKLLRAVADGDLEMVRYLLEWTEEDLED), 743–772 (DGSSPLYVAALHGRADLIPLLLKHGANAGA), 776–805 (DQAVPLHLACQQGHFQVVKCLLDSNAKPNK), 809–838 (SGNTPLIYACSGGHHEVVALLLQHGAAINT), and 842–871 (KGNTALHEAVIEKHVFVVELLLLHGASVQV). The interval 692-746 (TEEDLEDAEDTVSAVDPEFCHPLCQCPKCAPAQKRLAKVPASGLGVNVTSQDGSS) is sufficient for interaction with VPS29. Phosphoserine is present on residues serine 962 and serine 970. Residues 987-1050 (PAQSGSHAAE…TPQEVSASRS (64 aa)) are disordered. A compositionally biased stretch (basic and acidic residues) spans 994–1007 (AAEKGNSDWPERPR). A Phosphothreonine modification is found at threonine 1023. Polar residues predominate over residues 1040 to 1050 (STPQEVSASRS).

As to quaternary structure, interacts with RAB21 (GDP-bound form), VPS29, KIF5A, KIF5C, GOLGA4. Interacts with RAB32 (GTP-bound form), RAB38 (GTP-bound form), VAMP7. Interacts with low affinity with RAB5. ANKRD27:RAB32 heterodimers can homodimerize to form tetramers. Can interact with RAB38 or RAB32, VPS29 and VAMP7 simultaneously. A decreased interaction with RAB32 seen in the presence of SGSM2.

The protein localises to the early endosome. It localises to the late endosome. The protein resides in the cytoplasmic vesicle membrane. It is found in the lysosome. Its subcellular location is the cell membrane. The protein localises to the melanosome. Functionally, may be a guanine exchange factor (GEF) for Rab21, Rab32 and Rab38 and regulate endosome dynamics. May regulate the participation of VAMP7 in membrane fusion events; in vitro inhibits VAMP7-mediated SNARE complex formation by trapping VAMP7 in a closed, fusogenically inactive conformation. Involved in peripheral melanosomal distribution of TYRP1 in melanocytes; the function, which probably is implicating vesicle-trafficking, includes cooperation with Rab32, Rab38 and VAMP7. Involved in the regulation of neurite growth; the function seems to require its GEF activity, probably towards Rab21, and VAMP7 but not Rab32/38. Proposed to be involved in Golgi sorting of VAMP7 and transport of VAMP7 vesicles to the cell surface; the function seems to implicate kinesin heavy chain isoform 5 proteins, GOLGA4, RAB21 and MACF1. Required for the colocalization of VAMP7 and Rab21, probably on TGN sites. Involved in GLUT1 endosome-to-plasma membrane trafficking; the function is dependent of association with VPS29. Regulates the proper trafficking of melanogenic enzymes TYR, TYRP1 and DCT/TYRP2 to melanosomes in melanocytes. This chain is Ankyrin repeat domain-containing protein 27 (ANKRD27), found in Pongo abelii (Sumatran orangutan).